The chain runs to 77 residues: Cysteine-rich protein 1 (77 aa).

The region spanning 2-63 is the LIM zinc-binding domain; sequence PKCPKCNKEV…HPCYAAMFGP (62 aa). N6-acetyllysine occurs at positions 9 and 22. Arg-68 bears the Omega-N-methylarginine mark.

Its function is as follows. Seems to have a role in zinc absorption and may function as an intracellular zinc transport protein. The protein is Cysteine-rich protein 1 (CRIP1) of Homo sapiens (Human).